Consider the following 341-residue polypeptide: N-acetyl-gamma-glutamyl-phosphate reductase (341 aa).

Residue C146 is part of the active site.

The protein belongs to the NAGSA dehydrogenase family. Type 1 subfamily.

Its subcellular location is the cytoplasm. The catalysed reaction is N-acetyl-L-glutamate 5-semialdehyde + phosphate + NADP(+) = N-acetyl-L-glutamyl 5-phosphate + NADPH + H(+). The protein operates within amino-acid biosynthesis; L-arginine biosynthesis; N(2)-acetyl-L-ornithine from L-glutamate: step 3/4. Catalyzes the NADPH-dependent reduction of N-acetyl-5-glutamyl phosphate to yield N-acetyl-L-glutamate 5-semialdehyde. In Limosilactobacillus fermentum (strain NBRC 3956 / LMG 18251) (Lactobacillus fermentum), this protein is N-acetyl-gamma-glutamyl-phosphate reductase.